A 279-amino-acid chain; its full sequence is Putative pyruvate, phosphate dikinase regulatory protein (279 aa).

ADP is bound at residue 153–160; it reads GISRTSKT.

This sequence belongs to the pyruvate, phosphate/water dikinase regulatory protein family. PDRP subfamily.

It catalyses the reaction N(tele)-phospho-L-histidyl/L-threonyl-[pyruvate, phosphate dikinase] + ADP = N(tele)-phospho-L-histidyl/O-phospho-L-threonyl-[pyruvate, phosphate dikinase] + AMP + H(+). The catalysed reaction is N(tele)-phospho-L-histidyl/O-phospho-L-threonyl-[pyruvate, phosphate dikinase] + phosphate + H(+) = N(tele)-phospho-L-histidyl/L-threonyl-[pyruvate, phosphate dikinase] + diphosphate. Its function is as follows. Bifunctional serine/threonine kinase and phosphorylase involved in the regulation of the pyruvate, phosphate dikinase (PPDK) by catalyzing its phosphorylation/dephosphorylation. This is Putative pyruvate, phosphate dikinase regulatory protein from Brucella abortus (strain 2308).